Reading from the N-terminus, the 292-residue chain is RWD domain-containing protein 2A (292 aa).

Positions 14 to 134 (LEMEMLFSMF…QWLQDNSASY (121 aa)) constitute an RWD domain.

This is RWD domain-containing protein 2A (RWDD2A) from Macaca fascicularis (Crab-eating macaque).